A 21-amino-acid chain; its full sequence is Pseudogermin (21 aa).

The protein belongs to the germin family. In terms of assembly, homotetramer.

Its subcellular location is the secreted. It localises to the extracellular space. The protein resides in the apoplast. It is found in the cell wall. Functionally, may subsume the role of germin at the low water potentials during embryogenesis. The polypeptide is Pseudogermin (Triticum aestivum (Wheat)).